The chain runs to 159 residues: Ribosomal RNA large subunit methyltransferase H (159 aa).

S-adenosyl-L-methionine-binding positions include Leu-76, Gly-108, and 127 to 132; that span reads FSPMTF.

It belongs to the RNA methyltransferase RlmH family. In terms of assembly, homodimer.

It localises to the cytoplasm. It catalyses the reaction pseudouridine(1915) in 23S rRNA + S-adenosyl-L-methionine = N(3)-methylpseudouridine(1915) in 23S rRNA + S-adenosyl-L-homocysteine + H(+). Functionally, specifically methylates the pseudouridine at position 1915 (m3Psi1915) in 23S rRNA. This is Ribosomal RNA large subunit methyltransferase H from Alkaliphilus oremlandii (strain OhILAs) (Clostridium oremlandii (strain OhILAs)).